Reading from the N-terminus, the 579-residue chain is Acyl-coenzyme A synthetase ACSM5, mitochondrial (579 aa).

The N-terminal 26 residues, 1–26 (MRPWLRHLVLQALRNSRAFCGSHGKP), are a transit peptide targeting the mitochondrion. K97 carries the post-translational modification N6-acetyllysine; alternate. At K97 the chain carries N6-succinyllysine; alternate. K152 bears the N6-acetyllysine mark. An ATP-binding site is contributed by 230–238 (TSGTTGAPK). The residue at position 303 (K303) is an N6-acetyllysine; alternate. The residue at position 303 (K303) is an N6-succinyllysine; alternate. ATP is bound by residues 368–373 (EGYGQS), D455, R470, and K566.

The protein belongs to the ATP-dependent AMP-binding enzyme family. The cofactor is Mg(2+). Mn(2+) serves as cofactor. In terms of tissue distribution, detected in kidney and liver.

It localises to the mitochondrion matrix. It catalyses the reaction a medium-chain fatty acid + ATP + CoA = a medium-chain fatty acyl-CoA + AMP + diphosphate. Its function is as follows. Catalyzes the activation of fatty acids by CoA to produce an acyl-CoA, the first step in fatty acid metabolism. This chain is Acyl-coenzyme A synthetase ACSM5, mitochondrial (ACSM5), found in Homo sapiens (Human).